Here is a 591-residue protein sequence, read N- to C-terminus: ATP-dependent lipid A-core flippase (591 aa).

5 helical membrane passes run 34-54, 71-91, 158-178, 258-278, and 285-305; these read LILAVLLMAGAAATQPTLAVI, IWSVPLAVIGLILLRGVCNFF, LVVISLIAVLLYMSWLLTVII, LTPLTQVCIAVAVGAVIAVAL, and TLTAGAFAAFMSALAQIFDPI. An ABC transmembrane type-1 domain is found at 35-317; the sequence is ILAVLLMAGA…LTNLASKMQK (283 aa). An ABC transporter domain is found at 350 to 586; sequence IEFRQIGHRF…GGLYATLYNM (237 aa). Position 384–391 (384–391) interacts with ATP; sequence GRSGSGKT.

Belongs to the ABC transporter superfamily. Lipid exporter (TC 3.A.1.106) family. In terms of assembly, homodimer.

It localises to the cell inner membrane. The enzyme catalyses ATP + H2O + lipid A-core oligosaccharideSide 1 = ADP + phosphate + lipid A-core oligosaccharideSide 2.. Involved in lipopolysaccharide (LPS) biosynthesis. Translocates lipid A-core from the inner to the outer leaflet of the inner membrane. Transmembrane domains (TMD) form a pore in the inner membrane and the ATP-binding domain (NBD) is responsible for energy generation. This is ATP-dependent lipid A-core flippase from Bordetella avium (strain 197N).